The primary structure comprises 350 residues: tRNA uridine(34) hydroxylase (350 aa).

The region spanning 146–240 is the Rhodanese domain; the sequence is DDPDAVFIDM…YARRAREQGL (95 aa). The Cysteine persulfide intermediate role is filled by cysteine 200. Over residues 319 to 328 the composition is skewed to basic and acidic residues; that stretch reads RRRRAGRENG. The segment at 319–350 is disordered; the sequence is RRRRAGRENGNKIFNKSRGRLNSKLSIPDPAE.

The protein belongs to the TrhO family.

The catalysed reaction is uridine(34) in tRNA + AH2 + O2 = 5-hydroxyuridine(34) in tRNA + A + H2O. Its function is as follows. Catalyzes oxygen-dependent 5-hydroxyuridine (ho5U) modification at position 34 in tRNAs. The chain is tRNA uridine(34) hydroxylase from Salmonella choleraesuis (strain SC-B67).